The sequence spans 462 residues: Chromosomal replication initiator protein DnaA (462 aa).

Residues 1–84 (MAVSLWQQCI…RFDIGSRPSA (84 aa)) form a domain I, interacts with DnaA modulators region. The tract at residues 84–125 (ARTVQPAPAAPRPTTGHTQTKARVGTAFNIQAEPMANANHRS) is domain II. Positions 126–342 (NINPTYQFDN…GALNRVIANA (217 aa)) are domain III, AAA+ region. ATP is bound by residues Gly170, Gly172, Lys173, and Thr174. A domain IV, binds dsDNA region spans residues 343 to 462 (NFTGRPITID…YANLIRTLSS (120 aa)).

This sequence belongs to the DnaA family. As to quaternary structure, oligomerizes as a right-handed, spiral filament on DNA at oriC.

The protein resides in the cytoplasm. Functionally, plays an essential role in the initiation and regulation of chromosomal replication. ATP-DnaA binds to the origin of replication (oriC) to initiate formation of the DNA replication initiation complex once per cell cycle. Binds the DnaA box (a 9 base pair repeat at the origin) and separates the double-stranded (ds)DNA. Forms a right-handed helical filament on oriC DNA; dsDNA binds to the exterior of the filament while single-stranded (ss)DNA is stabiized in the filament's interior. The ATP-DnaA-oriC complex binds and stabilizes one strand of the AT-rich DNA unwinding element (DUE), permitting loading of DNA polymerase. After initiation quickly degrades to an ADP-DnaA complex that is not apt for DNA replication. Binds acidic phospholipids. The protein is Chromosomal replication initiator protein DnaA of Shewanella denitrificans (strain OS217 / ATCC BAA-1090 / DSM 15013).